The chain runs to 398 residues: Phosphoglycerate kinase (398 aa).

Residues 21–23 (DFN), Arg36, 59–62 (HLGR), Arg119, and Arg157 each bind substrate. Residues Lys208, Gly296, Glu327, and 354–357 (GGDS) contribute to the ATP site.

Belongs to the phosphoglycerate kinase family. As to quaternary structure, monomer.

It is found in the cytoplasm. The enzyme catalyses (2R)-3-phosphoglycerate + ATP = (2R)-3-phospho-glyceroyl phosphate + ADP. The protein operates within carbohydrate degradation; glycolysis; pyruvate from D-glyceraldehyde 3-phosphate: step 2/5. This Streptococcus sanguinis (strain SK36) protein is Phosphoglycerate kinase.